The primary structure comprises 276 residues: Malonyl-[acyl-carrier protein] O-methyltransferase (276 aa).

This sequence belongs to the methyltransferase superfamily.

It catalyses the reaction malonyl-[ACP] + S-adenosyl-L-methionine = malonyl-[ACP] methyl ester + S-adenosyl-L-homocysteine. The protein operates within cofactor biosynthesis; biotin biosynthesis. Its function is as follows. Converts the free carboxyl group of a malonyl-thioester to its methyl ester by transfer of a methyl group from S-adenosyl-L-methionine (SAM). It allows to synthesize pimeloyl-ACP via the fatty acid synthetic pathway. The protein is Malonyl-[acyl-carrier protein] O-methyltransferase of Paenibacillus sp. (strain JDR-2).